We begin with the raw amino-acid sequence, 323 residues long: Synaptonemal complex central element protein 1 (323 aa).

The segment covering methionine 1 to alanine 10 has biased composition (polar residues). 2 disordered regions span residues methionine 1–lysine 31 and lysine 294–lysine 323. Basic and acidic residues-rich tracts occupy residues aspartate 20–lysine 31 and serine 313–lysine 323. Positions glutamine 25–glutamine 290 form a coiled coil.

The protein belongs to the SYCE family. In terms of assembly, homodimer. Found in a complex with SYCP1 and SYCE2. Interacts with SYCP1, SYCE2 and SYCE3. Interacts with SIX6OS1.

The protein resides in the nucleus. It is found in the chromosome. Functionally, major component of the transverse central element of synaptonemal complexes (SCS), formed between homologous chromosomes during meiotic prophase. Requires SYCP1 in order to be incorporated into the central element. May have a role in the synaptonemal complex assembly, stabilization and recombination. This chain is Synaptonemal complex central element protein 1 (SYCE1), found in Bos taurus (Bovine).